The following is an 825-amino-acid chain: Zinc finger protein 28 (825 aa).

The interval 26–65 (RPGGGPAAGTVVAPGSPDRGRPRSRNSLASQDQQGAVTSG) is disordered. Residues 33–42 (AGTVVAPGSP) show a composition bias toward low complexity. Polar residues predominate over residues 51–65 (NSLASQDQQGAVTSG). A KRAB domain is found at 103-174 (VTFGDVAVVF…KRKMRKGQHL (72 aa)). 14 C2H2-type zinc fingers span residues 377–399 (FQCNECKKTFTQSSSLTVHQRIH), 405–427 (YKCNQCGKAFSDGSSFARHQRCH), 433–456 (YECPECGKAFIQNTSLVRHWRYYH), 462–484 (FDCIDCGKAFSDHIGLNQHRRIH), 490–512 (YTCEVCHKSFRYGSSLTVHQRIH), 518–540 (YECEICRKAFSHHASLTQHQRVH), 546–568 (FKCKECGKAFRQNIHLASHWRIH), 574–596 (FECGECGKSFSISSQLATHQRIH), 602–624 (YECKVCRKAFTQKAHLAQHQKTH), 630–652 (YECKECGKAFSQTTHLIQHQRVH), 658–680 (YKCLECGKAFGDNSSCTQHRRLH), 686–708 (YECVECGKTFKTKSSLICHRRCH), 714–736 (YECSACGKAFSHRQSLSVHQRIH), and 742–764 (YECKECRKTFIQIGHLNQHKRVH). The segment at 770–792 (YNYKKGRRAFRQTAHFAHHQQIH) adopts a C2H2-type 15; degenerate zinc-finger fold.

It belongs to the krueppel C2H2-type zinc-finger protein family. Expressed predominantly in ovary.

The protein resides in the nucleus. Its function is as follows. May be involved in transcriptional regulation. May have a role in embryonic development. The sequence is that of Zinc finger protein 28 (Zfp28) from Mus musculus (Mouse).